A 274-amino-acid chain; its full sequence is NH(3)-dependent NAD(+) synthetase (274 aa).

Residue 46-53 (GISGGQDS) coordinates ATP. Asp-52 is a Mg(2+) binding site. Arg-140 lines the deamido-NAD(+) pocket. Thr-160 is a binding site for ATP. Glu-165 is a binding site for Mg(2+). Deamido-NAD(+) contacts are provided by Lys-173 and Asp-180. The ATP site is built by Lys-189 and Thr-211. 260–261 (HK) is a binding site for deamido-NAD(+).

It belongs to the NAD synthetase family. As to quaternary structure, homodimer.

It carries out the reaction deamido-NAD(+) + NH4(+) + ATP = AMP + diphosphate + NAD(+) + H(+). It functions in the pathway cofactor biosynthesis; NAD(+) biosynthesis; NAD(+) from deamido-NAD(+) (ammonia route): step 1/1. In terms of biological role, catalyzes the ATP-dependent amidation of deamido-NAD to form NAD. Uses ammonia as a nitrogen source. In Streptococcus suis (strain 05ZYH33), this protein is NH(3)-dependent NAD(+) synthetase.